Here is a 167-residue protein sequence, read N- to C-terminus: Ribosome maturation factor RimP (167 aa).

This sequence belongs to the RimP family.

The protein localises to the cytoplasm. Its function is as follows. Required for maturation of 30S ribosomal subunits. The polypeptide is Ribosome maturation factor RimP (Streptomyces griseus subsp. griseus (strain JCM 4626 / CBS 651.72 / NBRC 13350 / KCC S-0626 / ISP 5235)).